The primary structure comprises 478 residues: Trigger factor (478 aa).

Positions 154 to 167 are enriched in basic and acidic residues; it reads MAKDSRSFEPREEG. Disordered regions lie at residues 154-173 and 441-478; these read MAKD…AQSG and KEAL…KAAG. A PPIase FKBP-type domain is found at 173–258; sequence GDRVTIDFVG…VKAVAAPGET (86 aa).

This sequence belongs to the FKBP-type PPIase family. Tig subfamily.

The protein resides in the cytoplasm. It catalyses the reaction [protein]-peptidylproline (omega=180) = [protein]-peptidylproline (omega=0). Its function is as follows. Involved in protein export. Acts as a chaperone by maintaining the newly synthesized protein in an open conformation. Functions as a peptidyl-prolyl cis-trans isomerase. The sequence is that of Trigger factor from Methylorubrum extorquens (strain CM4 / NCIMB 13688) (Methylobacterium extorquens).